Here is a 335-residue protein sequence, read N- to C-terminus: N-acetylmuramoyl-L-alanine amidase sle1 (335 aa).

A signal peptide spans 1–25 (MQKKVIAAIIGTSAISAVAATQANA). The LysM 1 domain occupies 27–70 (TTHTVKPGESVWAISNKYGISIAKLKSLNNLTSNLIFPNQVLKV). A compositionally biased stretch (low complexity) spans 71–86 (SGSSNSTSNSSRPSTN). Residues 71–90 (SGSSNSTSNSSRPSTNSGGG) form a disordered region. 2 consecutive LysM domains span residues 91–134 (SYYT…KLKV) and 158–201 (SYYT…KLKV). One can recognise a Peptidase C51 domain in the interval 211-335 (ASATTTNRGY…YQVNNYRYIH (125 aa)).

It is found in the secreted. The protein resides in the cell surface. The catalysed reaction is Hydrolyzes the link between N-acetylmuramoyl residues and L-amino acid residues in certain cell-wall glycopeptides.. Peptidoglycan hydrolase involved in the splitting of the septum during cell division. This is N-acetylmuramoyl-L-alanine amidase sle1 (sle1) from Staphylococcus aureus (strain bovine RF122 / ET3-1).